The chain runs to 1302 residues: Vascular endothelial growth factor receptor kdr-like (1302 aa).

Positions 1–28 are cleaved as a signal peptide; that stretch reads MTPLKTSVKAFFTLHVLFSCISHGLVEG. The Extracellular portion of the chain corresponds to 29–740; that stretch reads SRLPDPQLLP…GEDGKPNIEV (712 aa). Ig-like C2-type domains follow at residues 34–115, 143–206, 222–318, 326–412, 419–542, 545–636, and 643–728; these read PQLL…HEVS, DPYF…VDNA, KNLA…TKVI, NVTH…ISYK, PKIF…FYVD, PQPF…SALT, and PWLM…AVIT. Cystine bridges form between cysteine 55–cysteine 104 and cysteine 150–cysteine 199. N-linked (GlcNAc...) asparagine glycans are attached at residues asparagine 69 and asparagine 97. 17 N-linked (GlcNAc...) asparagine glycosylation sites follow: asparagine 242, asparagine 265, asparagine 291, asparagine 326, asparagine 370, asparagine 380, asparagine 408, asparagine 453, asparagine 466, asparagine 505, asparagine 517, asparagine 532, asparagine 607, asparagine 611, asparagine 630, asparagine 648, and asparagine 655. A disulfide bridge connects residues cysteine 243 and cysteine 302. Cysteine 444 and cysteine 524 form a disulfide bridge. Residues cysteine 565 and cysteine 618 are joined by a disulfide bond. A disulfide bond links cysteine 664 and cysteine 712. A helical transmembrane segment spans residues 741 to 761; it reads IILVSTGAAATFLWIMLILFI. The Cytoplasmic segment spans residues 762-1302; the sequence is RKLRKPSSAD…YVVRYSTPPV (541 aa). A Protein kinase domain is found at 809 to 1139; sequence LRLGKTLGHG…ELVERLGDLL (331 aa). ATP contacts are provided by residues 815–823 and lysine 843; that span reads LGHGAFGKV. Aspartate 1003 serves as the catalytic Proton acceptor. Phosphotyrosine; by autocatalysis occurs at positions 1029, 1034, and 1150. Disordered regions lie at residues 1159 to 1179 and 1266 to 1292; these read TKADPSNQSPTEETSTRPVSL and PLVPSLSLEDSSLDSEMECHSPPPDYN. The segment covering 1162–1176 has biased composition (polar residues); sequence DPSNQSPTEETSTRP.

This sequence belongs to the protein kinase superfamily. Tyr protein kinase family. CSF-1/PDGF receptor subfamily. In terms of assembly, interacts with isoform VEGF165 of vegfaa and isoform VEGF171 of vegfab. In terms of processing, phosphorylated and activated by vegfaa and vegfab. First expressed in embryos between 5- and 7-somites. At 7 somites, expressed in discrete bilateral stripes both anteriorly and posteriorly, and in a transverse ectodermal stripe in the hindbrain. From 7-somites, expression seems to extend caudally from the head, and in both directions in the trunk region, until by 20-somites, expression is detected as a continuous band from the anterior head region to the tailbud. Concurrently, cells expressing kdrl in the mid- and posterior trunk regions converge medially. By 24 hours post-fertilization (hpf), expressed in all the endothelial cells lining the vasculature.

It is found in the cell membrane. It catalyses the reaction L-tyrosyl-[protein] + ATP = O-phospho-L-tyrosyl-[protein] + ADP + H(+). In terms of biological role, receptor for VEGF or VEGFC. Has a tyrosine-protein kinase activity. Combinations of multiple VEGF receptors are required for development of different blood vessel types in the embryo. Involved in angiogenesis, specifically in VEGF-induced sprouting of new blood vessels. Particularly involved in artery formation. Does not appear to be required for hematopoiesis. In Danio rerio (Zebrafish), this protein is Vascular endothelial growth factor receptor kdr-like (kdrl).